The chain runs to 401 residues: Adenylosuccinate synthetase (401 aa).

GTP contacts are provided by residues Gly-11–Lys-17 and Gly-39–Thr-41. Asp-12 serves as the catalytic Proton acceptor. Mg(2+) contacts are provided by Asp-12 and Gly-39. Residues Asp-12–Lys-15, Asn-37–His-40, Thr-127, Arg-141, Gln-212, Thr-227, and Arg-290 contribute to the IMP site. His-40 acts as the Proton donor in catalysis. A substrate-binding site is contributed by Ala-286–Arg-292. GTP is bound by residues Arg-292, Lys-318–Asp-320, and Ser-390–Gly-392.

This sequence belongs to the adenylosuccinate synthetase family. Homodimer. Requires Mg(2+) as cofactor.

It localises to the cytoplasm. It carries out the reaction IMP + L-aspartate + GTP = N(6)-(1,2-dicarboxyethyl)-AMP + GDP + phosphate + 2 H(+). It participates in purine metabolism; AMP biosynthesis via de novo pathway; AMP from IMP: step 1/2. Functionally, plays an important role in the de novo pathway of purine nucleotide biosynthesis. Catalyzes the first committed step in the biosynthesis of AMP from IMP. This Thermosipho africanus (strain TCF52B) protein is Adenylosuccinate synthetase.